We begin with the raw amino-acid sequence, 453 residues long: tRNA modification GTPase MnmE (453 aa).

Residues Arg28, Glu86, and Lys125 each contribute to the (6S)-5-formyl-5,6,7,8-tetrahydrofolate site. Positions 221–375 (GIKIAIVGEP…LIKYLEETSL (155 aa)) constitute a TrmE-type G domain. Asn231 provides a ligand contact to K(+). GTP contacts are provided by residues 231-236 (NAGKSS), 250-256 (TNIPGTT), and 276-279 (DTAG). Residue Ser235 participates in Mg(2+) binding. K(+) is bound by residues Thr250, Ile252, and Thr255. Thr256 contacts Mg(2+). Lys453 contacts (6S)-5-formyl-5,6,7,8-tetrahydrofolate.

This sequence belongs to the TRAFAC class TrmE-Era-EngA-EngB-Septin-like GTPase superfamily. TrmE GTPase family. As to quaternary structure, homodimer. Heterotetramer of two MnmE and two MnmG subunits. It depends on K(+) as a cofactor.

It is found in the cytoplasm. Functionally, exhibits a very high intrinsic GTPase hydrolysis rate. Involved in the addition of a carboxymethylaminomethyl (cmnm) group at the wobble position (U34) of certain tRNAs, forming tRNA-cmnm(5)s(2)U34. The polypeptide is tRNA modification GTPase MnmE (Mycoplasmoides gallisepticum (strain R(low / passage 15 / clone 2)) (Mycoplasma gallisepticum)).